Reading from the N-terminus, the 68-residue chain is U19-ctenitoxin-Pn1a (68 aa).

Gln1 is subject to Pyrrolidone carboxylic acid. 5 disulfides stabilise this stretch: Cys8–Cys19, Cys13–Cys28, Cys18–Cys51, Cys38–Cys59, and Cys53–Cys65.

In terms of tissue distribution, expressed by the venom gland.

The protein localises to the secreted. Its function is as follows. Non-toxic to mice and insects. This is U19-ctenitoxin-Pn1a from Phoneutria nigriventer (Brazilian armed spider).